The sequence spans 601 residues: Elongation factor 4 (601 aa).

Positions 5-187 (SNIRNFSIIA…AIVERLPAPE (183 aa)) constitute a tr-type G domain. Residues 17-22 (DHGKST) and 134-137 (NKID) contribute to the GTP site.

Belongs to the TRAFAC class translation factor GTPase superfamily. Classic translation factor GTPase family. LepA subfamily.

It is found in the cell inner membrane. It catalyses the reaction GTP + H2O = GDP + phosphate + H(+). Functionally, required for accurate and efficient protein synthesis under certain stress conditions. May act as a fidelity factor of the translation reaction, by catalyzing a one-codon backward translocation of tRNAs on improperly translocated ribosomes. Back-translocation proceeds from a post-translocation (POST) complex to a pre-translocation (PRE) complex, thus giving elongation factor G a second chance to translocate the tRNAs correctly. Binds to ribosomes in a GTP-dependent manner. The polypeptide is Elongation factor 4 (Oleidesulfovibrio alaskensis (strain ATCC BAA-1058 / DSM 17464 / G20) (Desulfovibrio alaskensis)).